Consider the following 81-residue polypeptide: ATP synthase subunit c (81 aa).

Helical transmembrane passes span 6 to 26 and 57 to 77; these read AAASVIAAALAVGLAAIGPGF and LAFMESLTIYGLVIALVLLFA.

Belongs to the ATPase C chain family. As to quaternary structure, F-type ATPases have 2 components, F(1) - the catalytic core - and F(0) - the membrane proton channel. F(1) has five subunits: alpha(3), beta(3), gamma(1), delta(1), epsilon(1). F(0) has four main subunits: a(1), b(1), b'(1) and c(10-14). The alpha and beta chains form an alternating ring which encloses part of the gamma chain. F(1) is attached to F(0) by a central stalk formed by the gamma and epsilon chains, while a peripheral stalk is formed by the delta, b and b' chains.

It localises to the cellular thylakoid membrane. In terms of biological role, f(1)F(0) ATP synthase produces ATP from ADP in the presence of a proton or sodium gradient. F-type ATPases consist of two structural domains, F(1) containing the extramembraneous catalytic core and F(0) containing the membrane proton channel, linked together by a central stalk and a peripheral stalk. During catalysis, ATP synthesis in the catalytic domain of F(1) is coupled via a rotary mechanism of the central stalk subunits to proton translocation. Key component of the F(0) channel; it plays a direct role in translocation across the membrane. A homomeric c-ring of between 10-14 subunits forms the central stalk rotor element with the F(1) delta and epsilon subunits. This Rippkaea orientalis (strain PCC 8801 / RF-1) (Cyanothece sp. (strain PCC 8801)) protein is ATP synthase subunit c.